A 649-amino-acid polypeptide reads, in one-letter code: MFSIFKRRSVQAALAASGLVGGAVFYSDFIKRPAPSHFNPQFTPFTKSLAPPPSRETLLKNVEDISKFDVLIIGGGATGTGVAVDASTRGLNVCLLEKTDFASETSSKSTKMAHGGVRYLEKAVFQLSKAQLDLVIEALNERANMLRTAPHLCTVLPIMIPVYKWWQVPYFFVGCKIYDWVAGSKNLRASTIFSKETTVAIAPMLDDSNLKASCVYHDGSFNDTRMNTTLAVTAIDNGATVLNYMEVKKLLKSKDNKLEGVLAIDRETGKEYQIKATSVVNATGPFSDKILEMDADPQGEPPKTAQFPRMVVPSAGVHVVLPEYYCPPNIGILDPSTSDNRVMFFLPWQGKVIAGTTDKPLSSVPTNPTPSEDDIQLILKELQKYLVFPVDREDVLSAWCGIRPLVRDPSTVPPGTDPTTGETQGLVRSHFIFKSDTGLLTISGGKWTTYREMAEETVNELIKDHDFGKALKPCQTKKLILVGGENYYKNYSARLIHEYHIPLRLAKHLSHNYGSRAPLILELYSKTDFNKLPVTLADKEVFAPSSDASSDKSVSYASFDEPFTVAELKYSIKYEYTRTPTDFLARRTRLAFLDARQALQAVAGVTHVMKEEFGWDDATTDKLAQEARDYIGGMGVSSDRFDVKQFEVK.

Residue 69-97 participates in FAD binding; sequence DVLIIGGGATGTGVAVDASTRGLNVCLLE.

The protein belongs to the FAD-dependent glycerol-3-phosphate dehydrogenase family. It depends on FAD as a cofactor.

The protein localises to the mitochondrion. It carries out the reaction a quinone + sn-glycerol 3-phosphate = dihydroxyacetone phosphate + a quinol. It functions in the pathway polyol metabolism; glycerol degradation via glycerol kinase pathway; glycerone phosphate from sn-glycerol 3-phosphate (anaerobic route): step 1/1. This Schizosaccharomyces pombe (strain 972 / ATCC 24843) (Fission yeast) protein is Glycerol-3-phosphate dehydrogenase, mitochondrial (gut2).